A 335-amino-acid chain; its full sequence is Biotin synthase (335 aa).

The Radical SAM core domain maps to 46 to 274; that stretch reads YDIQLASLFS…ESKIRLSAGR (229 aa). [4Fe-4S] cluster-binding residues include Cys-61, Cys-65, and Cys-68. Residues Cys-105, Cys-137, Cys-197, and Arg-269 each coordinate [2Fe-2S] cluster.

It belongs to the radical SAM superfamily. Biotin synthase family. In terms of assembly, homodimer. It depends on [4Fe-4S] cluster as a cofactor. [2Fe-2S] cluster serves as cofactor.

The catalysed reaction is (4R,5S)-dethiobiotin + (sulfur carrier)-SH + 2 reduced [2Fe-2S]-[ferredoxin] + 2 S-adenosyl-L-methionine = (sulfur carrier)-H + biotin + 2 5'-deoxyadenosine + 2 L-methionine + 2 oxidized [2Fe-2S]-[ferredoxin]. It participates in cofactor biosynthesis; biotin biosynthesis; biotin from 7,8-diaminononanoate: step 2/2. Catalyzes the conversion of dethiobiotin (DTB) to biotin by the insertion of a sulfur atom into dethiobiotin via a radical-based mechanism. The chain is Biotin synthase from Prochlorococcus marinus (strain MIT 9301).